The sequence spans 391 residues: DNA primase small subunit PriS (391 aa).

Residues Asp98, Asp100, and Asp294 contribute to the active site.

This sequence belongs to the eukaryotic-type primase small subunit family. As to quaternary structure, heterodimer of a small subunit (PriS) and a large subunit (PriL). Mg(2+) serves as cofactor. It depends on Mn(2+) as a cofactor.

Functionally, catalytic subunit of DNA primase, an RNA polymerase that catalyzes the synthesis of short RNA molecules used as primers for DNA polymerase during DNA replication. The small subunit contains the primase catalytic core and has DNA synthesis activity on its own. Binding to the large subunit stabilizes and modulates the activity, increasing the rate of DNA synthesis while decreasing the length of the DNA fragments, and conferring RNA synthesis capability. The DNA polymerase activity may enable DNA primase to also catalyze primer extension after primer synthesis. May also play a role in DNA repair. The polypeptide is DNA primase small subunit PriS (Halobacterium salinarum (strain ATCC 29341 / DSM 671 / R1)).